We begin with the raw amino-acid sequence, 724 residues long: Polyribonucleotide nucleotidyltransferase (724 aa).

Mg(2+)-binding residues include Asp488 and Asp494. The KH domain maps to 555-614 (PRMITVKINPEKIRDVIGKGGSTIQALTKETGCTIDIGEDGTITIASTSSEGMAEAKRRI). Positions 624-692 (GKIYNGTVLK…EKGRMRLSIK (69 aa)) constitute an S1 motif domain. The tract at residues 697–724 (EEGDVPVAAPQAPGAGDAASQQQQQQQQ) is disordered. A compositionally biased stretch (low complexity) spans 701-724 (VPVAAPQAPGAGDAASQQQQQQQQ).

It belongs to the polyribonucleotide nucleotidyltransferase family. It depends on Mg(2+) as a cofactor.

The protein localises to the cytoplasm. It catalyses the reaction RNA(n+1) + phosphate = RNA(n) + a ribonucleoside 5'-diphosphate. Functionally, involved in mRNA degradation. Catalyzes the phosphorolysis of single-stranded polyribonucleotides processively in the 3'- to 5'-direction. The sequence is that of Polyribonucleotide nucleotidyltransferase from Ralstonia pickettii (strain 12J).